The chain runs to 204 residues: MTNFPKIGKTPPNFLTIGVYKKRLGKIRLSDYRGKKYVILFFYPANFTAISPTELMLLSDRISEFRKLSTQILAISVDSPFSHLQYLLCNREEGGLEDLNYPLVSDLTQTITRDYQVLTDEGLAFPGLFIIDKEGIIQYYTVNNLLCGRNINELLRILESIQYVKENPGYACPVNWNFGDQVFYSHPLKSKIYFKDLYSPKKSS.

The Thioredoxin domain maps to 5 to 163 (PKIGKTPPNF…LLRILESIQY (159 aa)).

It belongs to the peroxiredoxin family. AhpC/Prx1 subfamily.

The protein resides in the plastid. It is found in the chloroplast. The catalysed reaction is a hydroperoxide + [protein]-dithiol = [protein]-disulfide + an alcohol + H2O. The protein is Putative peroxiredoxin ycf42 (ycf42) of Trieres chinensis (Marine centric diatom).